The following is a 117-amino-acid chain: Appetite-regulating hormone (117 aa).

A signal peptide spans 1-23 (MPSLGTMCSLLLFSVLWVDLAMA). A lipid anchor (O-decanoyl serine; alternate) is attached at S26. S26 is lipidated: O-hexanoyl serine; alternate. Residue S26 is the site of O-octanoyl serine; alternate attachment. The segment at 30 to 68 (PEHQKLQQRKESKKPPAKLQPRALEGSLGPEDTSQVEEA) is disordered. Over residues 31–43 (EHQKLQQRKESKK) the composition is skewed to basic and acidic residues. Residues 52–75 (ALEGSLGPEDTSQVEEAEDELEIR) constitute a propeptide, removed in mature form. L98 carries the leucine amide modification. Residues 99–117 (GKFLQEVLWEDTNEALADE) constitute a propeptide, removed in mature form.

It belongs to the motilin family. Post-translationally, O-octanoylated by GOAT/MBOAT4. O-octanoylation is essential for ghrelin activity. In terms of processing, amidation of Leu-98 is essential for obestatin activity.

It localises to the secreted. Its function is as follows. Ghrelin is the ligand for growth hormone secretagogue receptor type 1 (GHSR). Induces the release of growth hormone from the pituitary. Has an appetite-stimulating effect, induces adiposity and stimulates gastric acid secretion. Involved in growth regulation. In terms of biological role, obestatin may be the ligand for GPR39. May have an appetite-reducing effect resulting in decreased food intake. May reduce gastric emptying activity and jejunal motility. The polypeptide is Appetite-regulating hormone (GHRL) (Canis lupus familiaris (Dog)).